The sequence spans 779 residues: Aconitate hydratase, mitochondrial (779 aa).

The transit peptide at 1–28 (MIAMDRIARIPIARWTSRAFRVSAAARQ) directs the protein to the mitochondrion. Residues Gln-97 and 190 to 192 (DSH) each bind substrate. Cys-383, Cys-446, and Cys-449 together coordinate [4Fe-4S] cluster. Substrate is bound by residues Arg-472, Arg-477, Arg-605, and 668 to 669 (SR).

Belongs to the aconitase/IPM isomerase family. In terms of assembly, monomer. [4Fe-4S] cluster is required as a cofactor.

It is found in the mitochondrion. The catalysed reaction is citrate = D-threo-isocitrate. It participates in carbohydrate metabolism; tricarboxylic acid cycle; isocitrate from oxaloacetate: step 2/2. Its function is as follows. Catalyzes the isomerization of citrate to isocitrate via cis-aconitate. The chain is Aconitate hydratase, mitochondrial from Gracilaria gracilis (Red alga).